A 450-amino-acid chain; its full sequence is Oxygen-independent coproporphyrinogen III oxidase (450 aa).

The region spanning 45 to 282 (IPAGGSISLY…RTLILWDGYQ (238 aa)) is the Radical SAM core domain. An S-adenosyl-L-methionine-binding site is contributed by Y54. The [4Fe-4S] cluster site is built by C60 and C64. S-adenosyl-L-methionine is bound at residue F66. C67 serves as a coordination point for [4Fe-4S] cluster. Residues G111, 112-113 (GT), E144, Q171, R183, D208, A242, and I328 each bind S-adenosyl-L-methionine.

The protein belongs to the anaerobic coproporphyrinogen-III oxidase family. Monomer. [4Fe-4S] cluster is required as a cofactor.

It is found in the cytoplasm. The enzyme catalyses coproporphyrinogen III + 2 S-adenosyl-L-methionine = protoporphyrinogen IX + 2 5'-deoxyadenosine + 2 L-methionine + 2 CO2. It participates in porphyrin-containing compound metabolism; protoporphyrin-IX biosynthesis; protoporphyrinogen-IX from coproporphyrinogen-III (AdoMet route): step 1/1. In terms of biological role, involved in the heme and chlorophyll biosynthesis. Catalyzes the anaerobic oxidative decarboxylation of propionate groups of rings A and B of coproporphyrinogen III to yield the vinyl groups in protoporphyrinogen IX. In Cereibacter sphaeroides (strain ATCC 17023 / DSM 158 / JCM 6121 / CCUG 31486 / LMG 2827 / NBRC 12203 / NCIMB 8253 / ATH 2.4.1.) (Rhodobacter sphaeroides), this protein is Oxygen-independent coproporphyrinogen III oxidase (hemZ).